A 136-amino-acid chain; its full sequence is MLQPKRTKFRKVMTGRNRGLAKGTEVSFGEFGLKAVGRGRLTARQIEAARRAMTRHVKRQGQIWIRVFPDKPITEKPLEVRQGKGKGNVEYWVAQIQPGKVMYEMNGVPEELAREAFRLAARKLPIKTTFVTKQVM.

It belongs to the universal ribosomal protein uL16 family. Part of the 50S ribosomal subunit.

Its function is as follows. Binds 23S rRNA and is also seen to make contacts with the A and possibly P site tRNAs. The protein is Large ribosomal subunit protein uL16 of Aliivibrio salmonicida (strain LFI1238) (Vibrio salmonicida (strain LFI1238)).